Here is a 240-residue protein sequence, read N- to C-terminus: 2,3,4,5-tetrahydropyridine-2,6-dicarboxylate N-acetyltransferase (240 aa).

It belongs to the transferase hexapeptide repeat family. DapH subfamily.

It catalyses the reaction (S)-2,3,4,5-tetrahydrodipicolinate + acetyl-CoA + H2O = L-2-acetamido-6-oxoheptanedioate + CoA. The protein operates within amino-acid biosynthesis; L-lysine biosynthesis via DAP pathway; LL-2,6-diaminopimelate from (S)-tetrahydrodipicolinate (acetylase route): step 1/3. Catalyzes the transfer of an acetyl group from acetyl-CoA to tetrahydrodipicolinate. The polypeptide is 2,3,4,5-tetrahydropyridine-2,6-dicarboxylate N-acetyltransferase (Bacillus anthracis (strain A0248)).